Reading from the N-terminus, the 266-residue chain is Translation initiation factor 2 subunit alpha (266 aa).

Residues 12-83 form the S1 motif domain; it reads GEILIATVKQ…RKGTVDVSLK (72 aa).

It belongs to the eIF-2-alpha family. Heterotrimer composed of an alpha, a beta and a gamma chain.

In terms of biological role, eIF-2 functions in the early steps of protein synthesis by forming a ternary complex with GTP and initiator tRNA. The sequence is that of Translation initiation factor 2 subunit alpha from Saccharolobus solfataricus (strain ATCC 35092 / DSM 1617 / JCM 11322 / P2) (Sulfolobus solfataricus).